A 246-amino-acid polypeptide reads, in one-letter code: Deoxycytidylate 5-hydroxymethyltransferase (246 aa).

Cysteine 148 is a catalytic residue.

Belongs to the thymidylate synthase family.

It catalyses the reaction dCMP + (6R)-5,10-methylene-5,6,7,8-tetrahydrofolate + H2O = 5-hydroxymethyl-dCMP + (6S)-5,6,7,8-tetrahydrofolate. In Enterobacteria phage T4 (Bacteriophage T4), this protein is Deoxycytidylate 5-hydroxymethyltransferase (42).